The primary structure comprises 197 residues: Glycerol-3-phosphate acyltransferase (197 aa).

5 helical membrane-spanning segments follow: residues 7-27 (TLLP…LILT), 55-75 (GLAA…VLIV), 78-98 (VWPG…CFPV), 116-136 (LALA…VLFL), and 157-177 (VLGY…VLYL).

It belongs to the PlsY family. Probably interacts with PlsX.

Its subcellular location is the cell inner membrane. The catalysed reaction is an acyl phosphate + sn-glycerol 3-phosphate = a 1-acyl-sn-glycero-3-phosphate + phosphate. Its pathway is lipid metabolism; phospholipid metabolism. In terms of biological role, catalyzes the transfer of an acyl group from acyl-phosphate (acyl-PO(4)) to glycerol-3-phosphate (G3P) to form lysophosphatidic acid (LPA). This enzyme utilizes acyl-phosphate as fatty acyl donor, but not acyl-CoA or acyl-ACP. This Novosphingobium aromaticivorans (strain ATCC 700278 / DSM 12444 / CCUG 56034 / CIP 105152 / NBRC 16084 / F199) protein is Glycerol-3-phosphate acyltransferase.